The following is an 836-amino-acid chain: MPSLSSKTSTMQRSCRPQMSACPNQQQKDRPVPQLSCVLCRDRKLKCDKLDPCSNCTSSGVACTPIYRPRLPRGRHARTVQTKASTPPDTRRRGSSNESTTAPAPDDGGLGTHIDQLDNLVQDREVSKLGLSGEGNGLQELISLVSDETMPATAWSTHCFGTISRILSSRIRRLESLVQETARIQTPKRARKPMTPVVVQWYSAPLAGCNWNRMVVQTPQGLEVQQFPAPPTSYSARRSPELSGNDIWADLMDHDMHDPPQYNALELPPDLTNEGGVDNMGSSGRDDPINNGFNALRLLGINNSLSPSFISLPRDRLSASKLCQVYLQNVDPIIKILHRPSLSRWMVDGAPTYLGSSEDDYAVKALESAVCYTAANTMTEHQCQAAFQKTKSSIMAVRRKMCEDALENAGLLTTRDMTVLQAFILYLVTPTDLSKIGRRSEDKDTAVWALVALAIRLIKAMGLNQEPSEGARKGESFFQQQLRLRLWLTACLIDLQASFAQATDPLITHRDAACAVPYVANINDSDFDVDTAHPVASHEELTDTTFALVTYRVQVAGRLFNFGPGCSTAAERHKLAQEVQQQVFTLLHYCDPESSSYAWFTWHSTQSIIFAVRLSELLPFRCGQPGGHVPPPSPRAEGDTTLLWRALQNLEKAQLIRADPRGDGFRWYITTPWLALSTAISECNSCTDVALVCRAWPVIEISYRQHEELQISDECQLPQGPLVHLMNKTREKLAPLLQEGGARLSDSQTVDRASADSLQPPVPVGSIPIDPLLTNGSLGADTAMSEASSIGSLPPFEQQCWKQMTMPTDGAPVRDGVVFTSELYNPLQSDFLNSHG.

The span at 1–26 (MPSLSSKTSTMQRSCRPQMSACPNQQ) shows a compositional bias: polar residues. The interval 1 to 29 (MPSLSSKTSTMQRSCRPQMSACPNQQQKD) is disordered. The zn(2)-C6 fungal-type DNA-binding region spans 37–63 (CVLCRDRKLKCDKLDPCSNCTSSGVAC). Positions 72–114 (PRGRHARTVQTKASTPPDTRRRGSSNESTTAPAPDDGGLGTHI) are disordered. Polar residues predominate over residues 79-88 (TVQTKASTPP).

Its subcellular location is the nucleus. Its function is as follows. Probable transcription factor that regulates expression of the gene cluster that mediates the biosynthesis of viridicatumtoxin, a tetracycline-like fungal meroterpenoid with a unique, fused spirobicyclic ring system. The protein is Transcription factor vrtR2 of Penicillium aethiopicum.